A 276-amino-acid chain; its full sequence is Large ribosomal subunit protein uL2 (276 aa).

The interval 210 to 276 is disordered; that stretch reads GRNRHRGIRP…KLIISRRKGK (67 aa). Residues 230 to 240 are compositionally biased toward basic and acidic residues; sequence DHPHGGGEGKK. Over residues 255–276 the composition is skewed to basic residues; the sequence is KGAKTRRKKASDKLIISRRKGK.

Belongs to the universal ribosomal protein uL2 family. In terms of assembly, part of the 50S ribosomal subunit. Forms a bridge to the 30S subunit in the 70S ribosome.

One of the primary rRNA binding proteins. Required for association of the 30S and 50S subunits to form the 70S ribosome, for tRNA binding and peptide bond formation. It has been suggested to have peptidyltransferase activity; this is somewhat controversial. Makes several contacts with the 16S rRNA in the 70S ribosome. The protein is Large ribosomal subunit protein uL2 of Campylobacter jejuni subsp. jejuni serotype O:6 (strain 81116 / NCTC 11828).